Reading from the N-terminus, the 107-residue chain is DNA polymerase delta subunit 4 (107 aa).

Residues 1–16 carry the PCNA-interaction protein motif (PIP box) motif; the sequence is MGRKRLITDSYPVVKR. The disordered stretch occupies residues 1-35; the sequence is MGRKRLITDSYPVVKRREGSAGHSKGELAPDLGEE. The span at 15-28 shows a compositional bias: basic and acidic residues; that stretch reads KRREGSAGHSKGEL.

The protein belongs to the DNA polymerase delta subunit 4 family. In terms of assembly, component of the tetrameric DNA polymerase delta complex (Pol-delta4), which consists of POLD1/p125, POLD2/p50, POLD3/p66/p68 and POLD4/p12, with POLD1 bearing DNA polymerase and 3' to 5' proofreading exonuclease activities. Within this complex, directly interacts with POLD1 and POLD2. Directly interacts with PCNA, as do POLD1 and POLD3; this interaction stimulates Pol-delta4 polymerase activity. As POLD1 and POLD2, directly interacts with WRNIP1; this interaction stimulates DNA polymerase delta-mediated DNA synthesis, independently of the presence of PCNA, possibly by increasing initiation frequency. Upon genotoxic stress induced by DNA damaging agents or by replication stress, POLD4 is proteolytically degraded and Pol-delta4 is converted into a trimeric form of the complex (Pol-delta3) that has an increased proofreading activity. The DNA polymerase delta complex interacts with POLDIP2; this interaction is probably mediated through direct binding to POLD2. Ubiquitinated; undergoes 'Lys-48'-linked ubiquitination in response to UV irradiation, leading to proteasomal degradation. This modification is partly mediated by RNF8 and by the DCX(DTL) E3 ubiquitin ligase complex (also called CRL4(CDT2)). Efficient degradation requires the presence of PCNA and is required for the inhibition of fork progression after DNA damage.

It localises to the nucleus. Its function is as follows. As a component of the tetrameric DNA polymerase delta 4 complex (Pol-delta4), plays a role in high fidelity genome replication and repair. Within this complex, increases the rate of DNA synthesis and decreases fidelity by regulating POLD1 polymerase and proofreading 3' to 5' exonuclease activity. Pol-delta4 participates in Okazaki fragment processing, through both the short flap pathway, as well as a nick translation system. Under conditions of DNA replication stress, required for the repair of broken replication forks through break-induced replication (BIR), a mechanism that may induce segmental genomic duplications of up to 200 kb. Involved in Pol-delta4 translesion synthesis (TLS) of templates carrying O6-methylguanine or abasic sites. Its degradation in response to DNA damage is required for the inhibition of fork progression and cell survival. This is DNA polymerase delta subunit 4 (POLD4) from Bos taurus (Bovine).